The sequence spans 165 residues: Large ribosomal subunit protein uL10 (165 aa).

This sequence belongs to the universal ribosomal protein uL10 family. As to quaternary structure, part of the ribosomal stalk of the 50S ribosomal subunit. The N-terminus interacts with L11 and the large rRNA to form the base of the stalk. The C-terminus forms an elongated spine to which L12 dimers bind in a sequential fashion forming a multimeric L10(L12)X complex.

Forms part of the ribosomal stalk, playing a central role in the interaction of the ribosome with GTP-bound translation factors. This is Large ribosomal subunit protein uL10 from Hamiltonella defensa subsp. Acyrthosiphon pisum (strain 5AT).